Reading from the N-terminus, the 665-residue chain is GTPase IMAP family member 8 (665 aa).

The 203-residue stretch at 8 to 210 (MSELRLLLLG…HVNFKTEGSR (203 aa)) folds into the AIG1-type G 1 domain. The tract at residues 17–24 (GKCRSGKS) is G1. GTP is bound by residues 17-25 (GKCRSGKSA) and serine 38. Residues 44–48 (TVIKM) are G2. The G3 stretch occupies residues 65–68 (DTPD). Residues 134–137 (TRKD) form a G4 region. Residues 135 to 137 (RKD) and asparagine 170 each bind GTP. Residues 169-171 (NNK) form a G5 region. Residues 217-246 (EAASQEGDKPQGPRERQLQSTGPEQNPGTS) are disordered. Residues 222 to 233 (EGDKPQGPRERQ) are compositionally biased toward basic and acidic residues. Polar residues predominate over residues 234–246 (LQSTGPEQNPGTS). AIG1-type G domains lie at 245-435 (TSEL…VFRE) and 436-644 (KETL…SKLI). 2 coiled-coil regions span residues 400–427 (NYRA…HQNG) and 608–657 (QAQE…EKLL).

This sequence belongs to the TRAFAC class TrmE-Era-EngA-EngB-Septin-like GTPase superfamily. AIG1/Toc34/Toc159-like paraseptin GTPase family. IAN subfamily. As to expression, expressed in the spleen, intestine, liver, and colon, as well as in lung, placenta, kidney, muscle, and heart. Extremely low expression, if any, in brain, in thymus, bone marrow, and blood leukocytes. Detected in T-cells.

Its subcellular location is the endoplasmic reticulum. It is found in the golgi apparatus. The protein resides in the mitochondrion. It localises to the cytoplasm. The protein localises to the cytosol. Its function is as follows. Exerts an anti-apoptotic effect in the immune system and is involved in responses to infections. This is GTPase IMAP family member 8 (GIMAP8) from Homo sapiens (Human).